A 236-amino-acid polypeptide reads, in one-letter code: Ribose-5-phosphate isomerase A (236 aa).

Substrate is bound by residues 29–32 (SGST), 86–89 (DGAD), and 99–102 (KGGG). The active-site Proton acceptor is the E108. K126 provides a ligand contact to substrate.

The protein belongs to the ribose 5-phosphate isomerase family. As to quaternary structure, homodimer.

The catalysed reaction is aldehydo-D-ribose 5-phosphate = D-ribulose 5-phosphate. It functions in the pathway carbohydrate degradation; pentose phosphate pathway; D-ribose 5-phosphate from D-ribulose 5-phosphate (non-oxidative stage): step 1/1. In terms of biological role, catalyzes the reversible conversion of ribose-5-phosphate to ribulose 5-phosphate. This is Ribose-5-phosphate isomerase A from Prochlorococcus marinus (strain NATL1A).